Reading from the N-terminus, the 118-residue chain is Large ribosomal subunit protein bL20c (118 aa).

It belongs to the bacterial ribosomal protein bL20 family.

Its subcellular location is the plastid. The protein resides in the chloroplast. Functionally, binds directly to 23S ribosomal RNA and is necessary for the in vitro assembly process of the 50S ribosomal subunit. It is not involved in the protein synthesizing functions of that subunit. The sequence is that of Large ribosomal subunit protein bL20c from Adiantum capillus-veneris (Maidenhair fern).